Consider the following 75-residue polypeptide: Large ribosomal subunit protein uL29 (75 aa).

Belongs to the universal ribosomal protein uL29 family.

The chain is Large ribosomal subunit protein uL29 from Ureaplasma urealyticum serovar 10 (strain ATCC 33699 / Western).